The chain runs to 72 residues: Translation initiation factor IF-1 (72 aa).

The region spanning 1 to 72 (MAKEDVIEVE…NRGRIIYRFK (72 aa)) is the S1-like domain.

The protein belongs to the IF-1 family. As to quaternary structure, component of the 30S ribosomal translation pre-initiation complex which assembles on the 30S ribosome in the order IF-2 and IF-3, IF-1 and N-formylmethionyl-tRNA(fMet); mRNA recruitment can occur at any time during PIC assembly.

It localises to the cytoplasm. Its function is as follows. One of the essential components for the initiation of protein synthesis. Stabilizes the binding of IF-2 and IF-3 on the 30S subunit to which N-formylmethionyl-tRNA(fMet) subsequently binds. Helps modulate mRNA selection, yielding the 30S pre-initiation complex (PIC). Upon addition of the 50S ribosomal subunit IF-1, IF-2 and IF-3 are released leaving the mature 70S translation initiation complex. In Syntrophomonas wolfei subsp. wolfei (strain DSM 2245B / Goettingen), this protein is Translation initiation factor IF-1.